The chain runs to 166 residues: Polyadenylate-binding protein 2 (166 aa).

Residues 55–132 (QSVYVGNVDY…RPLKVTPKRT (78 aa)) enclose the RRM domain. The interval 129-166 (PKRTNVPGMSRGRGRGRGRGRGRGRGGYRGRARGFAPY) is disordered. Positions 140–160 (GRGRGRGRGRGRGRGGYRGRA) are enriched in basic residues.

The protein resides in the nucleus. This is Polyadenylate-binding protein 2 (pab2) from Schizosaccharomyces pombe (strain 972 / ATCC 24843) (Fission yeast).